Here is an 87-residue protein sequence, read N- to C-terminus: Translation initiation factor IF-1 2 (87 aa).

In terms of domain architecture, S1-like spans 1–72 (MAKEELLELD…TKGRINFRHK (72 aa)).

It belongs to the IF-1 family. In terms of assembly, component of the 30S ribosomal translation pre-initiation complex which assembles on the 30S ribosome in the order IF-2 and IF-3, IF-1 and N-formylmethionyl-tRNA(fMet); mRNA recruitment can occur at any time during PIC assembly.

The protein localises to the cytoplasm. Its function is as follows. One of the essential components for the initiation of protein synthesis. Stabilizes the binding of IF-2 and IF-3 on the 30S subunit to which N-formylmethionyl-tRNA(fMet) subsequently binds. Helps modulate mRNA selection, yielding the 30S pre-initiation complex (PIC). Upon addition of the 50S ribosomal subunit IF-1, IF-2 and IF-3 are released leaving the mature 70S translation initiation complex. In Burkholderia ambifaria (strain ATCC BAA-244 / DSM 16087 / CCUG 44356 / LMG 19182 / AMMD) (Burkholderia cepacia (strain AMMD)), this protein is Translation initiation factor IF-1 2.